We begin with the raw amino-acid sequence, 448 residues long: Adenylosuccinate synthetase (448 aa).

GTP contacts are provided by residues 22-28 (GDEGKGK) and 50-52 (GHT). Asp-23 functions as the Proton acceptor in the catalytic mechanism. Residues Asp-23 and Gly-50 each coordinate Mg(2+). Residues 23-26 (DEGK), 48-51 (NAGH), Thr-139, Arg-153, Gln-234, Thr-249, and Arg-321 each bind IMP. Residue His-51 is the Proton donor of the active site. 317-323 (SVTGRPR) is a substrate binding site. GTP is bound by residues Arg-323, 349 to 351 (KLD), and 431 to 433 (STG).

This sequence belongs to the adenylosuccinate synthetase family. Homodimer. Mg(2+) is required as a cofactor.

The protein resides in the cytoplasm. It catalyses the reaction IMP + L-aspartate + GTP = N(6)-(1,2-dicarboxyethyl)-AMP + GDP + phosphate + 2 H(+). The protein operates within purine metabolism; AMP biosynthesis via de novo pathway; AMP from IMP: step 1/2. Functionally, plays an important role in the de novo pathway of purine nucleotide biosynthesis. Catalyzes the first committed step in the biosynthesis of AMP from IMP. The polypeptide is Adenylosuccinate synthetase (Paraburkholderia xenovorans (strain LB400)).